Here is a 169-residue protein sequence, read N- to C-terminus: Prolyl-tRNA synthetase associated domain-containing protein 1 (169 aa).

This sequence belongs to the PRORSD1 family.

This is Prolyl-tRNA synthetase associated domain-containing protein 1 (Prorsd1) from Mus musculus (Mouse).